The primary structure comprises 198 residues: MKYPPSLVSLIRELSRLPGIGPKSAQRLAFHLFEQPREDIERLAGALLAAKRDLHTCPVCFNITDAERCDVCSDPSRDQNLICVVEEPGDVIAIERSGEYRGLYHVLHGVLSPMNGVGPEKLHIKPLLPRVQEGQEIILATGTTVEGDATALYLQRLLEPLGAVVSRIAYGLPVGGALEYADEVTLGRALTGRQRVSK.

Residues 57–72 (CPVCFNITDAERCDVC) form a C4-type zinc finger. The Toprim domain occupies 80 to 173 (NLICVVEEPG…VVSRIAYGLP (94 aa)).

It belongs to the RecR family.

Its function is as follows. May play a role in DNA repair. It seems to be involved in an RecBC-independent recombinational process of DNA repair. It may act with RecF and RecO. This Deinococcus deserti (strain DSM 17065 / CIP 109153 / LMG 22923 / VCD115) protein is Recombination protein RecR.